The following is a 754-amino-acid chain: 5-methyltetrahydropteroyltriglutamate--homocysteine methyltransferase (754 aa).

5-methyltetrahydropteroyltri-L-glutamate-binding positions include 16 to 19 (RELK) and K114. L-homocysteine-binding positions include 430–432 (IGS) and E483. L-methionine-binding positions include 430–432 (IGS) and E483. Residues 514–515 (RC) and W560 contribute to the 5-methyltetrahydropteroyltri-L-glutamate site. Residue D598 participates in L-homocysteine binding. D598 lines the L-methionine pocket. 5-methyltetrahydropteroyltri-L-glutamate is bound at residue E604. Positions 640, 642, and 664 each coordinate Zn(2+). H693 (proton donor) is an active-site residue. C725 lines the Zn(2+) pocket.

The protein belongs to the vitamin-B12 independent methionine synthase family. It depends on Zn(2+) as a cofactor.

It catalyses the reaction 5-methyltetrahydropteroyltri-L-glutamate + L-homocysteine = tetrahydropteroyltri-L-glutamate + L-methionine. The protein operates within amino-acid biosynthesis; L-methionine biosynthesis via de novo pathway; L-methionine from L-homocysteine (MetE route): step 1/1. Catalyzes the transfer of a methyl group from 5-methyltetrahydrofolate to homocysteine resulting in methionine formation. The protein is 5-methyltetrahydropteroyltriglutamate--homocysteine methyltransferase of Aeromonas salmonicida (strain A449).